The chain runs to 353 residues: tRNA-specific 2-thiouridylase MnmA 2 (353 aa).

ATP contacts are provided by residues 9-16 (AMSGGVDS) and M35. C98 functions as the Nucleophile in the catalytic mechanism. Cysteines 98 and 194 form a disulfide. G122 serves as a coordination point for ATP. Positions 144–146 (KDQ) are interaction with tRNA. C194 functions as the Cysteine persulfide intermediate in the catalytic mechanism. The tract at residues 300 to 301 (RY) is interaction with tRNA.

Belongs to the MnmA/TRMU family.

The protein localises to the cytoplasm. The enzyme catalyses S-sulfanyl-L-cysteinyl-[protein] + uridine(34) in tRNA + AH2 + ATP = 2-thiouridine(34) in tRNA + L-cysteinyl-[protein] + A + AMP + diphosphate + H(+). In terms of biological role, catalyzes the 2-thiolation of uridine at the wobble position (U34) of tRNA, leading to the formation of s(2)U34. In Clostridium botulinum (strain ATCC 19397 / Type A), this protein is tRNA-specific 2-thiouridylase MnmA 2.